The primary structure comprises 159 residues: Crossover junction endodeoxyribonuclease RuvC (159 aa).

Active-site residues include D7, E67, and D139. The Mg(2+) site is built by D7, E67, and D139.

The protein belongs to the RuvC family. In terms of assembly, homodimer which binds Holliday junction (HJ) DNA. The HJ becomes 2-fold symmetrical on binding to RuvC with unstacked arms; it has a different conformation from HJ DNA in complex with RuvA. In the full resolvosome a probable DNA-RuvA(4)-RuvB(12)-RuvC(2) complex forms which resolves the HJ. Mg(2+) serves as cofactor.

Its subcellular location is the cytoplasm. The catalysed reaction is Endonucleolytic cleavage at a junction such as a reciprocal single-stranded crossover between two homologous DNA duplexes (Holliday junction).. The RuvA-RuvB-RuvC complex processes Holliday junction (HJ) DNA during genetic recombination and DNA repair. Endonuclease that resolves HJ intermediates. Cleaves cruciform DNA by making single-stranded nicks across the HJ at symmetrical positions within the homologous arms, yielding a 5'-phosphate and a 3'-hydroxyl group; requires a central core of homology in the junction. The consensus cleavage sequence is 5'-(A/T)TT(C/G)-3'. Cleavage occurs on the 3'-side of the TT dinucleotide at the point of strand exchange. HJ branch migration catalyzed by RuvA-RuvB allows RuvC to scan DNA until it finds its consensus sequence, where it cleaves and resolves the cruciform DNA. The protein is Crossover junction endodeoxyribonuclease RuvC of Orientia tsutsugamushi (strain Boryong) (Rickettsia tsutsugamushi).